Here is a 692-residue protein sequence, read N- to C-terminus: Serine/threonine-protein phosphatase PP-Z1 (692 aa).

Disordered stretches follow at residues 1–309 and 321–357; these read MGNS…DIEN and ENVNDKNNNITDSKKDPNEEFNDIMQSSGNKNAPKKF. A lipid anchor (N-myristoyl glycine) is attached at Gly-2. 3 stretches are compositionally biased toward low complexity: residues 32-41, 49-69, and 91-122; these read SHSVKSAKSN, SLPSSSTTNTNSNVPDPSTPS, and SSSHSHSNSQNELLTTPSSSSTKRPSTSRRSS. Phosphoserine is present on Ser-49. The segment covering 170 to 179 has biased composition (acidic residues); that stretch reads LTDDDNDDKD. Residue Thr-171 is modified to Phosphothreonine. Residues 190-204 show a composition bias toward low complexity; that stretch reads RSSNSRPSSIRSGSV. Over residues 207 to 216 the composition is skewed to basic and acidic residues; it reads RKSDVTHEEP. Residues Ser-209 and Ser-222 each carry the phosphoserine modification. Composition is skewed to polar residues over residues 217-229 and 251-267; these read NNGSYSSNNQENY and FGSDGNTAYSTPLNSPG. At Thr-261 the chain carries Phosphothreonine. The residue at position 265 (Ser-265) is a Phosphoserine. The span at 280–289 shows a compositional bias: low complexity; the sequence is TSNSTSSLNH. Over residues 291–303 the composition is skewed to basic and acidic residues; sequence SSRDIYPSKHISN. Residues 321–331 are compositionally biased toward polar residues; it reads ENVNDKNNNIT. Residues Asp-419, His-421, Asp-447, and Asn-479 each coordinate Mn(2+). His-480 (proton donor) is an active-site residue. 2 residues coordinate Mn(2+): His-528 and His-603. Residues 672–692 are disordered; sequence LANQQQQMMETSITNDNESQQ. Residues 673–692 are compositionally biased toward polar residues; sequence ANQQQQMMETSITNDNESQQ. The residue at position 690 (Ser-690) is a Phosphoserine.

This sequence belongs to the PPP phosphatase family. PP-Z subfamily. In terms of assembly, interacts with SIS2 and VHS3, which regulate its activity. Mn(2+) is required as a cofactor.

It carries out the reaction O-phospho-L-seryl-[protein] + H2O = L-seryl-[protein] + phosphate. The enzyme catalyses O-phospho-L-threonyl-[protein] + H2O = L-threonyl-[protein] + phosphate. With respect to regulation, inhibited by the regulatory subunits VHS3 and SIS2. In terms of biological role, essential for the maintenance of cell size and integrity in response to osmotic stress. This is Serine/threonine-protein phosphatase PP-Z1 (PPZ1) from Saccharomyces cerevisiae (strain ATCC 204508 / S288c) (Baker's yeast).